We begin with the raw amino-acid sequence, 196 residues long: Calcineurin B homologous protein 2 (196 aa).

Glycine 2 is lipidated: N-myristoyl glycine. EF-hand domains lie at 26-61, 71-106, 111-146, and 152-187; these read ASLL…AVNP, FPNG…PKQP, SRMN…MVGV, and QLES…MNIE. At serine 27 the chain carries Phosphoserine. Aspartate 124, aspartate 126, aspartate 128, lysine 130, and glutamate 135 together coordinate Ca(2+). Residues 137 to 148 carry the Nuclear export signal motif; the sequence is LQVLRLMVGVQV. Ca(2+)-binding residues include aspartate 165, aspartate 167, aspartate 169, and glutamate 176.

It belongs to the calcineurin regulatory subunit family. CHP subfamily. As to quaternary structure, interacts with PPP3CA. Interacts with SLC9A1/NHE1; the interaction occurs in a calcium-dependent manner. Interacts with SLC9A1/NHE1.

The protein resides in the cytoplasm. The protein localises to the nucleus. Its subcellular location is the cell membrane. In terms of biological role, functions as an integral cofactor in cell pH regulation by controlling plasma membrane-type Na(+)/H(+) exchange activity. Binds to and activates SLC9A1/NHE1 in a serum-independent manner, thus increasing pH and protecting cells from serum deprivation-induced death. Also plays a role in the regulation of cell proliferation and tumor growth by increasing the phosphatase activity of PPP3CA in a calcium-dependent manner. Activator of the calcineurin/NFAT signaling pathway. Involved in the cytoplasmic translocation of the transcription factor NFATC3 to the nucleus. This is Calcineurin B homologous protein 2 (Chp2) from Mus musculus (Mouse).